We begin with the raw amino-acid sequence, 173 residues long: MADERSKLEQAGEGTNFSSDEIDRLRKRFMKLDTDASGILETNEFLSLPGVAANPLASRLMDVFDENHSGDVDFQEFINGLSTFSTKGNKKEKLRFAFKVYDIDRDGYISNGELFIVLKMMVGNNLKDAQLQQIVDKTIMEADKDGDGKISFEEFEAQVGGTNVYQSMTLDLF.

EF-hand domains follow at residues 20 to 55, 59 to 87, 89 to 124, and 130 to 165; these read DEID…AANP, RLMD…FSTK, NKKE…MVGN, and QLQQ…TNVY. D33, D35, S37, E44, D65, N67, S69, D71, E76, D102, D104, D106, Y108, E113, D143, D145, D147, K149, and E154 together coordinate Ca(2+).

Belongs to the calcineurin regulatory subunit family. Composed of a catalytic subunit (A) and a regulatory subunit (B).

Functionally, regulatory subunit of calcineurin, a calcium-dependent, calmodulin stimulated protein phosphatase. Confers calcium sensitivity. This Yarrowia lipolytica (strain CLIB 122 / E 150) (Yeast) protein is Calcineurin subunit B (CNB1).